A 416-amino-acid polypeptide reads, in one-letter code: Tryptophan synthase beta chain (416 aa).

Lys-109 carries the post-translational modification N6-(pyridoxal phosphate)lysine.

This sequence belongs to the TrpB family. Tetramer of two alpha and two beta chains. The cofactor is pyridoxal 5'-phosphate.

The catalysed reaction is (1S,2R)-1-C-(indol-3-yl)glycerol 3-phosphate + L-serine = D-glyceraldehyde 3-phosphate + L-tryptophan + H2O. The protein operates within amino-acid biosynthesis; L-tryptophan biosynthesis; L-tryptophan from chorismate: step 5/5. In terms of biological role, the beta subunit is responsible for the synthesis of L-tryptophan from indole and L-serine. In Prochlorococcus marinus (strain SARG / CCMP1375 / SS120), this protein is Tryptophan synthase beta chain.